The chain runs to 98 residues: Large ribosomal subunit protein uL23 (98 aa).

This sequence belongs to the universal ribosomal protein uL23 family. In terms of assembly, part of the 50S ribosomal subunit. Contacts protein L29, and trigger factor when it is bound to the ribosome.

Functionally, one of the early assembly proteins it binds 23S rRNA. One of the proteins that surrounds the polypeptide exit tunnel on the outside of the ribosome. Forms the main docking site for trigger factor binding to the ribosome. In Thioalkalivibrio sulfidiphilus (strain HL-EbGR7), this protein is Large ribosomal subunit protein uL23.